A 309-amino-acid polypeptide reads, in one-letter code: Ribosomal RNA small subunit methyltransferase H (309 aa).

S-adenosyl-L-methionine is bound by residues 36–38 (AGH), aspartate 55, phenylalanine 81, aspartate 102, and glutamine 109.

Belongs to the methyltransferase superfamily. RsmH family.

It localises to the cytoplasm. The catalysed reaction is cytidine(1402) in 16S rRNA + S-adenosyl-L-methionine = N(4)-methylcytidine(1402) in 16S rRNA + S-adenosyl-L-homocysteine + H(+). Functionally, specifically methylates the N4 position of cytidine in position 1402 (C1402) of 16S rRNA. This is Ribosomal RNA small subunit methyltransferase H from Mycoplasma genitalium (strain ATCC 33530 / DSM 19775 / NCTC 10195 / G37) (Mycoplasmoides genitalium).